We begin with the raw amino-acid sequence, 166 residues long: Transcription antitermination protein NusB (166 aa).

Basic and acidic residues predominate over residues 1–18 (MISDESDRFNPRDPKPAD). The disordered stretch occupies residues 1 to 30 (MISDESDRFNPRDPKPADAGKPSKSAKRRE).

This sequence belongs to the NusB family.

Its function is as follows. Involved in transcription antitermination. Required for transcription of ribosomal RNA (rRNA) genes. Binds specifically to the boxA antiterminator sequence of the ribosomal RNA (rrn) operons. The polypeptide is Transcription antitermination protein NusB (Pseudomonas entomophila (strain L48)).